Consider the following 97-residue polypeptide: UPF0250 protein RSc0326 (97 aa).

Belongs to the UPF0250 family.

This chain is UPF0250 protein RSc0326, found in Ralstonia nicotianae (strain ATCC BAA-1114 / GMI1000) (Ralstonia solanacearum).